We begin with the raw amino-acid sequence, 269 residues long: 3-methyl-2-oxobutanoate hydroxymethyltransferase (269 aa).

Positions 50 and 89 each coordinate Mg(2+). 3-methyl-2-oxobutanoate-binding positions include 50–51, Asp89, and Lys119; that span reads DS. Glu121 is a Mg(2+) binding site. Residue Glu187 is the Proton acceptor of the active site.

Belongs to the PanB family. In terms of assembly, homodecamer; pentamer of dimers. It depends on Mg(2+) as a cofactor.

Its subcellular location is the cytoplasm. The enzyme catalyses 3-methyl-2-oxobutanoate + (6R)-5,10-methylene-5,6,7,8-tetrahydrofolate + H2O = 2-dehydropantoate + (6S)-5,6,7,8-tetrahydrofolate. It participates in cofactor biosynthesis; (R)-pantothenate biosynthesis; (R)-pantoate from 3-methyl-2-oxobutanoate: step 1/2. Catalyzes the reversible reaction in which hydroxymethyl group from 5,10-methylenetetrahydrofolate is transferred onto alpha-ketoisovalerate to form ketopantoate. The protein is 3-methyl-2-oxobutanoate hydroxymethyltransferase of Corynebacterium efficiens (strain DSM 44549 / YS-314 / AJ 12310 / JCM 11189 / NBRC 100395).